We begin with the raw amino-acid sequence, 230 residues long: uncharacterized protein (230 aa).

The a divalent metal cation site is built by Glu-74, Glu-76, and Asp-105.

This sequence belongs to the FAH family.

This is an uncharacterized protein from Pyrococcus horikoshii (strain ATCC 700860 / DSM 12428 / JCM 9974 / NBRC 100139 / OT-3).